We begin with the raw amino-acid sequence, 134 residues long: Syncollin (134 aa).

Positions 1–21 are cleaved as a signal peptide; sequence MSPLRPLLLALALASVPCAQG.

Monomer and homooligomer; most probably hexameric. Interacts with GP2. In terms of processing, contains intrachain disulfide bonds.

The protein localises to the zymogen granule membrane. It is found in the zymogen granule lumen. Functions in exocytosis in pancreatic acinar cells regulating the fusion of zymogen granules with each other. May have a pore-forming activity on membranes and regulate exocytosis in other exocrine tissues. This Homo sapiens (Human) protein is Syncollin (SYCN).